Consider the following 273-residue polypeptide: MRRCIPHRCIGHGTVVSVRITVLGCSGSVVGPDSPASGYLLRAPHTPPLVIDFGGGVLGALQRHADPASVHVLLSHLHADHCLDLPGLFVWRRYHPSRPSGKALLYGPSDTWSRLGAASSPYGGEIDDCSDIFDVHHWADSEPVTLGALTIVPRLVAHPTESFGLRITDPSGASLAYSGDTGICDQLVELARGVDVFLCEASWTHSPKHPPDLHLSGTEAGMVAAQAGVRELLLTHIPPWTSREDVISEAKAEFDGPVHAVVCDETFEVRRAG.

The protein belongs to the AtsA family.

This is an uncharacterized protein from Mycobacterium tuberculosis (strain CDC 1551 / Oshkosh).